Consider the following 319-residue polypeptide: Quinolinate synthase (319 aa).

Positions 35 and 52 each coordinate iminosuccinate. Residue C97 participates in [4Fe-4S] cluster binding. Iminosuccinate-binding positions include Y123–N125 and S140. [4Fe-4S] cluster is bound at residue C183. Residues H209–E211 and T226 each bind iminosuccinate. Residue C276 coordinates [4Fe-4S] cluster.

It belongs to the quinolinate synthase family. Type 2 subfamily. The cofactor is [4Fe-4S] cluster.

Its subcellular location is the cytoplasm. The catalysed reaction is iminosuccinate + dihydroxyacetone phosphate = quinolinate + phosphate + 2 H2O + H(+). It participates in cofactor biosynthesis; NAD(+) biosynthesis; quinolinate from iminoaspartate: step 1/1. Functionally, catalyzes the condensation of iminoaspartate with dihydroxyacetone phosphate to form quinolinate. In Microcystis aeruginosa (strain NIES-843 / IAM M-2473), this protein is Quinolinate synthase.